We begin with the raw amino-acid sequence, 355 residues long: Inositol-tetrakisphosphate 1-kinase 4 (355 aa).

K65 is a 1D-myo-inositol 1,3,4-trisphosphate binding site. ATP-binding residues include R101 and K146. The 212-residue stretch at 107–318 (VVSGLRTPVS…FFLEMLRGTR (212 aa)) folds into the ATP-grasp domain. H157 and K190 together coordinate 1D-myo-inositol 1,3,4-trisphosphate. ATP-binding positions include 179 to 190 (QEFVNHGGVLFK) and S205. A disordered region spans residues 225 to 248 (FANISNQPLPPPDDDGGAADDDTP). Residues 236-247 (PDDDGGAADDDT) are compositionally biased toward acidic residues. 3 residues coordinate Mg(2+): D272, D289, and N291. Residue N291 participates in 1D-myo-inositol 1,3,4-trisphosphate binding.

The protein belongs to the ITPK1 family. Monomer. Mg(2+) is required as a cofactor.

The catalysed reaction is 1D-myo-inositol 3,4,5,6-tetrakisphosphate + ATP = 1D-myo-inositol 1,3,4,5,6-pentakisphosphate + ADP + H(+). The enzyme catalyses 1D-myo-inositol 1,3,4-trisphosphate + ATP = 1D-myo-inositol 1,3,4,5-tetrakisphosphate + ADP + H(+). It catalyses the reaction 1D-myo-inositol 1,3,4-trisphosphate + ATP = 1D-myo-inositol 1,3,4,6-tetrakisphosphate + ADP + H(+). Kinase that can phosphorylate various inositol polyphosphate such as Ins(3,4,5,6)P4 or Ins(1,3,4)P3 and participates in phytic acid biosynthesis in developing seeds. Phytic acid is the primary storage form of phosphorus in cereal grains and other plant seeds. The chain is Inositol-tetrakisphosphate 1-kinase 4 (ITPK4) from Oryza sativa subsp. indica (Rice).